The following is a 130-amino-acid chain: Small ribosomal subunit protein uS9 (130 aa).

It belongs to the universal ribosomal protein uS9 family.

This chain is Small ribosomal subunit protein uS9, found in Exiguobacterium sp. (strain ATCC BAA-1283 / AT1b).